Here is a 351-residue protein sequence, read N- to C-terminus: MSATSASVTRHDWSLAEVKALFEQPFNDLLFQAQTVHRQHFDPNRVQVSTLLSIKTGACPEDCKYCPQSGHYNTGLDKEKLMEVQKVLEAAAEAKAIGSTRFCMGAAWKHPSAKDMPYVLKMVEGVKAMGLETCMTLGKLDQEQTRALAAAGLDYYNHNLDTSPEFYGNIITTRTYAERLETLSYVREAGMKICSGGILGMGESLDDRAGLLIQLANLPEHPESVPINMLVKVKGTPLAEEQDVDPFDFIRMLAVARIMMPKSHVRLSAGREQMNEQMQALAFFAGANSIFYGEKLLTTANPQADKDMQLFARLGIKPEERQEHADEVHQAAIEQALIEQRDSKLFYNAAV.

One can recognise a Radical SAM core domain in the interval 44–262 (NRVQVSTLLS…LAVARIMMPK (219 aa)). [4Fe-4S] cluster is bound by residues cysteine 59, cysteine 63, and cysteine 66. Residues cysteine 103, cysteine 134, cysteine 194, and arginine 266 each coordinate [2Fe-2S] cluster.

The protein belongs to the radical SAM superfamily. Biotin synthase family. Homodimer. [4Fe-4S] cluster serves as cofactor. Requires [2Fe-2S] cluster as cofactor.

It carries out the reaction (4R,5S)-dethiobiotin + (sulfur carrier)-SH + 2 reduced [2Fe-2S]-[ferredoxin] + 2 S-adenosyl-L-methionine = (sulfur carrier)-H + biotin + 2 5'-deoxyadenosine + 2 L-methionine + 2 oxidized [2Fe-2S]-[ferredoxin]. It functions in the pathway cofactor biosynthesis; biotin biosynthesis; biotin from 7,8-diaminononanoate: step 2/2. Catalyzes the conversion of dethiobiotin (DTB) to biotin by the insertion of a sulfur atom into dethiobiotin via a radical-based mechanism. The chain is Biotin synthase from Stutzerimonas stutzeri (strain A1501) (Pseudomonas stutzeri).